The primary structure comprises 139 residues: Small ribosomal subunit protein uS12m (139 aa).

The N-terminal 29 residues, 1–29 (MSWPGLLYGLTTSLSRGLALAPQLWAARS), are a transit peptide targeting the mitochondrion.

This sequence belongs to the universal ribosomal protein uS12 family. In terms of assembly, component of the mitochondrial ribosome small subunit (28S) which comprises a 12S rRNA and about 30 distinct proteins.

It is found in the mitochondrion. This is Small ribosomal subunit protein uS12m (Mrps12) from Mus musculus (Mouse).